Here is a 77-residue protein sequence, read N- to C-terminus: VpAmp2.0 (77 aa).

The N-terminal stretch at 1–23 (MQLRKALLVIFVAYLLVTDEAEA) is a signal peptide. Residues 49–77 (RKREIEDLFDPYQKDLDLQRLDRFFSQFQ) constitute a propeptide that is removed on maturation.

Belongs to the non-disulfide-bridged peptide (NDBP) superfamily. Medium-length antimicrobial peptide (group 3) family. In terms of tissue distribution, expressed by the venom gland.

It localises to the secreted. Its subcellular location is the target cell membrane. In terms of biological role, antimicrobial peptide with potent activity against Gram-positive bacteria S.aureus (MIC=10 uM) and S.agalactiaea (MIC=15 uM), and Gram-negative bacteria E.coli (MIC=24 uM) and P.aeruginosa (MIC=15 uM), as well as against yeasts Candida albicans (MIC=3.1 uM) and C.glabrata (MIC=25 uM). Also elicits low hemolysis on human erythrocytes (HC(50)=167 uM). In Mesomexovis punctatus (Scorpion), this protein is VpAmp2.0.